A 395-amino-acid polypeptide reads, in one-letter code: S-adenosylmethionine synthase (395 aa).

His16 contributes to the ATP binding site. Asp18 contributes to the Mg(2+) binding site. Glu44 is a K(+) binding site. L-methionine-binding residues include Glu57 and Gln100. Residues 100–110 (QSPDIAQGVDR) form a flexible loop region. ATP contacts are provided by residues 167–169 (DAK), 233–234 (RF), Asp242, 248–249 (RK), Ala265, and Lys269. Residue Asp242 coordinates L-methionine. Lys273 contacts L-methionine.

It belongs to the AdoMet synthase family. Homotetramer; dimer of dimers. Mg(2+) is required as a cofactor. Requires K(+) as cofactor.

It is found in the cytoplasm. It catalyses the reaction L-methionine + ATP + H2O = S-adenosyl-L-methionine + phosphate + diphosphate. Its pathway is amino-acid biosynthesis; S-adenosyl-L-methionine biosynthesis; S-adenosyl-L-methionine from L-methionine: step 1/1. Its function is as follows. Catalyzes the formation of S-adenosylmethionine (AdoMet) from methionine and ATP. The overall synthetic reaction is composed of two sequential steps, AdoMet formation and the subsequent tripolyphosphate hydrolysis which occurs prior to release of AdoMet from the enzyme. This is S-adenosylmethionine synthase from Burkholderia vietnamiensis (strain G4 / LMG 22486) (Burkholderia cepacia (strain R1808)).